The following is a 208-amino-acid chain: ATP-dependent Clp protease proteolytic subunit (208 aa).

Ser105 serves as the catalytic Nucleophile. His130 is a catalytic residue.

Belongs to the peptidase S14 family. In terms of assembly, fourteen ClpP subunits assemble into 2 heptameric rings which stack back to back to give a disk-like structure with a central cavity, resembling the structure of eukaryotic proteasomes.

Its subcellular location is the cytoplasm. It carries out the reaction Hydrolysis of proteins to small peptides in the presence of ATP and magnesium. alpha-casein is the usual test substrate. In the absence of ATP, only oligopeptides shorter than five residues are hydrolyzed (such as succinyl-Leu-Tyr-|-NHMec, and Leu-Tyr-Leu-|-Tyr-Trp, in which cleavage of the -Tyr-|-Leu- and -Tyr-|-Trp bonds also occurs).. In terms of biological role, cleaves peptides in various proteins in a process that requires ATP hydrolysis. Has a chymotrypsin-like activity. Plays a major role in the degradation of misfolded proteins. This chain is ATP-dependent Clp protease proteolytic subunit, found in Xanthomonas axonopodis pv. citri (strain 306).